The sequence spans 152 residues: MKLILQEKVANLGNIGDQVVVKPGYARNFLLPLGKAVPATPEHIAEFEKQRAELEKAAAELLAKAKARAKKLEDKSFKITANASDEGRLFGSIGPREIAQAITEAGIEIEKREVDLSQGPIRQVGEYEVPLRLHTDVSVNVKIEVAPENSNS.

The protein belongs to the bacterial ribosomal protein bL9 family.

Functionally, binds to the 23S rRNA. This is Large ribosomal subunit protein bL9 from Coxiella burnetii (strain RSA 331 / Henzerling II).